Reading from the N-terminus, the 608-residue chain is Kinetochore protein NUF2 (608 aa).

Residues 121–125 (IGNLR) are required for nuclear localization and function. Coiled coils occupy residues 176-319 (FESQ…QQKL) and 358-460 (REKL…IEEE).

This sequence belongs to the NUF2 family.

The protein localises to the chromosome. It localises to the centromere. Its subcellular location is the kinetochore. Its function is as follows. Required for anchoring centrosomal cores to the nuclear periphery. Plays a role in chromosome segregation but is dispensable for centromere clustering. The chain is Kinetochore protein NUF2 from Toxoplasma gondii (strain ATCC 50611 / Me49).